A 148-amino-acid chain; its full sequence is MAGNKMFCRPRRQRLSHSRRAELQFPVSHLERCLRESQHARHLSSTTPVFLAGVLEYLTANILEKVGKEVKNSCRLCITPEHVKRALQKDEQLRWILELEDDTHSQVEEMPQSEEEEEEEEEKEEEMVVLVVMGGRRRRRRRRRRKDS.

The tract at residues 101 to 128 (DDTHSQVEEMPQSEEEEEEEEEKEEEMV) is disordered. Positions 111–127 (PQSEEEEEEEEEKEEEM) are enriched in acidic residues.

Belongs to the histone H2A family. As to quaternary structure, the nucleosome is a histone octamer containing two molecules each of H2A, H2B, H3 and H4 assembled in one H3-H4 heterotetramer and two H2A-H2B heterodimers. The octamer wraps approximately 147 bp of DNA.

It is found in the nucleus. The protein resides in the chromosome. Functionally, core component of nucleosome. Nucleosomes wrap and compact DNA into chromatin, limiting DNA accessibility to the cellular machineries which require DNA as a template. Histones thereby play a central role in transcription regulation, DNA repair, DNA replication and chromosomal stability. DNA accessibility is regulated via a complex set of post-translational modifications of histones, also called histone code, and nucleosome remodeling. This is Histone H2A-like 3 from Homo sapiens (Human).